A 1517-amino-acid polypeptide reads, in one-letter code: Neurite extension and migration factor (1517 aa).

Over residues 381–405 (DKKKGKEEVHEDKSIEKKDEKDNGE) the composition is skewed to basic and acidic residues. 7 disordered regions span residues 381–416 (DKKKGKEEVHEDKSIEKKDEKDNGEKPALNNKPCSG), 505–529 (VNERKEWPPGGSKEEDDDEWCPKKR), 644–697 (SMEA…GLIG), 732–775 (KKIK…HMSE), 1065–1084 (RHSSLSEMSPPDTPSLSPQS), 1161–1228 (DEPA…KKGK), and 1372–1422 (AGTP…SSED). The span at 644–663 (SMEASASSKQVSFGSDQKQA) shows a compositional bias: polar residues. Over residues 678 to 687 (SALLAAPSSA) the composition is skewed to low complexity. Residues 764-773 (TPGTSNSSHM) show a composition bias toward polar residues.

It localises to the nucleus. It is found in the cytoplasm. Functionally, involved in neurite outgrowth by regulating cell-cell adhesion via the N-cadherin signaling pathway. May act by regulating expression of protein-coding genes, such as N-cadherins and integrin beta-1 (ITGB1). This Rattus norvegicus (Rat) protein is Neurite extension and migration factor.